The chain runs to 194 residues: UPF0301 protein FTA_1286 (194 aa).

This sequence belongs to the UPF0301 (AlgH) family.

This is UPF0301 protein FTA_1286 from Francisella tularensis subsp. holarctica (strain FTNF002-00 / FTA).